A 177-amino-acid chain; its full sequence is Early nodulin-like protein 6 (177 aa).

The first 23 residues, 1 to 23 (MGGQKIVLLSIFVCFYVFSLVSC), serve as a signal peptide directing secretion. Residues 24-127 (TEFEAGGENG…GQKMIIKVME (104 aa)) form the Phytocyanin domain. A glycan (N-linked (GlcNAc...) asparagine) is linked at Asn-41. A disulfide bond links Cys-81 and Cys-115. Asn-149 carries GPI-anchor amidated asparagine lipidation. Residues 150-177 (HAVRKTSRFLGAGLVTISILVITVFSLV) constitute a propeptide, removed in mature form.

Belongs to the early nodulin-like (ENODL) family. Confined to flowers.

The protein localises to the cell membrane. In terms of biological role, may act as a carbohydrate transporter. The chain is Early nodulin-like protein 6 from Arabidopsis thaliana (Mouse-ear cress).